The chain runs to 437 residues: Lipid II isoglutaminyl synthase (glutamine-hydrolyzing) subunit MurT (437 aa).

Residues C202, C205, C224, and C226 each contribute to the Zn(2+) site. D349 is an active-site residue.

This sequence belongs to the MurCDEF family. MurT subfamily. Forms a heterodimer with GatD.

It carries out the reaction beta-D-GlcNAc-(1-&gt;4)-Mur2Ac(oyl-L-Ala-gamma-D-Glu-L-Lys-D-Ala-D-Ala)-di-trans,octa-cis-undecaprenyl diphosphate + L-glutamine + ATP + H2O = beta-D-GlcNAc-(1-&gt;4)-Mur2Ac(oyl-L-Ala-D-isoglutaminyl-L-Lys-D-Ala-D-Ala)-di-trans,octa-cis-undecaprenyl diphosphate + L-glutamate + ADP + phosphate + H(+). The enzyme catalyses beta-D-GlcNAc-(1-&gt;4)-Mur2Ac(oyl-L-Ala-gamma-D-Glu-L-Lys-D-Ala-D-Ala)-di-trans,octa-cis-undecaprenyl diphosphate + ATP = beta-D-GlcNAc-(1-&gt;4)-Mur2Ac(oyl-L-Ala-gamma-D-O-P-Glu-L-Lys-D-Ala-D-Ala)-di-trans,octa-cis-undecaprenyl diphosphate + ADP. The catalysed reaction is beta-D-GlcNAc-(1-&gt;4)-Mur2Ac(oyl-L-Ala-gamma-D-O-P-Glu-L-Lys-D-Ala-D-Ala)-di-trans,octa-cis-undecaprenyl diphosphate + NH4(+) = beta-D-GlcNAc-(1-&gt;4)-Mur2Ac(oyl-L-Ala-D-isoglutaminyl-L-Lys-D-Ala-D-Ala)-di-trans,octa-cis-undecaprenyl diphosphate + phosphate + H(+). Its pathway is cell wall biogenesis; peptidoglycan biosynthesis. In terms of biological role, the lipid II isoglutaminyl synthase complex catalyzes the formation of alpha-D-isoglutamine in the cell wall lipid II stem peptide. The MurT subunit catalyzes the ATP-dependent amidation of D-glutamate residue of lipid II, converting it to an isoglutamine residue. The sequence is that of Lipid II isoglutaminyl synthase (glutamine-hydrolyzing) subunit MurT from Staphylococcus aureus (strain N315).